We begin with the raw amino-acid sequence, 354 residues long: Protein-glutamate methylesterase/protein-glutamine glutaminase 2 (354 aa).

The Response regulatory domain occupies 5-122; sequence RVLIVDDSAL…SLKIKEVAEE (118 aa). Position 56 is a 4-aspartylphosphate (Asp-56). Positions 159–354 constitute a CheB-type methylesterase domain; sequence PDTSFKKLIL…IADRIVELVR (196 aa). Catalysis depends on residues Ser-172, His-199, and Asp-298.

Belongs to the CheB family. Post-translationally, phosphorylated by CheA. Phosphorylation of the N-terminal regulatory domain activates the methylesterase activity.

The protein resides in the cytoplasm. The enzyme catalyses [protein]-L-glutamate 5-O-methyl ester + H2O = L-glutamyl-[protein] + methanol + H(+). The catalysed reaction is L-glutaminyl-[protein] + H2O = L-glutamyl-[protein] + NH4(+). Its function is as follows. Involved in chemotaxis. Part of a chemotaxis signal transduction system that modulates chemotaxis in response to various stimuli. Catalyzes the demethylation of specific methylglutamate residues introduced into the chemoreceptors (methyl-accepting chemotaxis proteins or MCP) by CheR. Also mediates the irreversible deamidation of specific glutamine residues to glutamic acid. This Carboxydothermus hydrogenoformans (strain ATCC BAA-161 / DSM 6008 / Z-2901) protein is Protein-glutamate methylesterase/protein-glutamine glutaminase 2.